The following is a 188-amino-acid chain: Elongation factor P-like protein (188 aa).

It belongs to the elongation factor P family.

In Vibrio campbellii (strain ATCC BAA-1116), this protein is Elongation factor P-like protein.